The following is a 244-amino-acid chain: Cytochrome c1 (244 aa).

Residues 1–19 (MRKLILATFLLLAPTALLA) form the signal peptide. Heme c is bound by residues C50, C53, and H54. The chain crosses the membrane as a helical span at residues 220–240 (YVLLFLGFLFILAYLLKKEYW).

As to quaternary structure, the main subunits of complex b-c1 are: cytochrome b, cytochrome c1 and the Rieske protein. Binds 1 heme c group covalently per subunit.

The protein resides in the cell membrane. In terms of biological role, component of the ubiquinol-cytochrome c reductase complex (complex III or cytochrome b-c1 complex), which is a respiratory chain that generates an electrochemical potential coupled to ATP synthesis. c1 functions as an electron donor to cytochrome c. This is Cytochrome c1 (petC) from Allochromatium vinosum (strain ATCC 17899 / DSM 180 / NBRC 103801 / NCIMB 10441 / D) (Chromatium vinosum).